The primary structure comprises 425 residues: Serine--tRNA ligase (425 aa).

Residue Thr233 to Glu235 coordinates L-serine. Residue Arg264–Glu266 coordinates ATP. Glu287 serves as a coordination point for L-serine. Glu351–Ser354 is a binding site for ATP. Residue Ser387 participates in L-serine binding.

The protein belongs to the class-II aminoacyl-tRNA synthetase family. Type-1 seryl-tRNA synthetase subfamily. In terms of assembly, homodimer. The tRNA molecule binds across the dimer.

Its subcellular location is the cytoplasm. It carries out the reaction tRNA(Ser) + L-serine + ATP = L-seryl-tRNA(Ser) + AMP + diphosphate + H(+). It catalyses the reaction tRNA(Sec) + L-serine + ATP = L-seryl-tRNA(Sec) + AMP + diphosphate + H(+). It functions in the pathway aminoacyl-tRNA biosynthesis; selenocysteinyl-tRNA(Sec) biosynthesis; L-seryl-tRNA(Sec) from L-serine and tRNA(Sec): step 1/1. In terms of biological role, catalyzes the attachment of serine to tRNA(Ser). Is also able to aminoacylate tRNA(Sec) with serine, to form the misacylated tRNA L-seryl-tRNA(Sec), which will be further converted into selenocysteinyl-tRNA(Sec). This Clostridium botulinum (strain Alaska E43 / Type E3) protein is Serine--tRNA ligase.